Here is a 331-residue protein sequence, read N- to C-terminus: Probable tRNA pseudouridine synthase B (331 aa).

The span at 1-15 shows a compositional bias: basic and acidic residues; that stretch reads MRCSQREVFVKREEP. Residues 1–27 form a disordered region; sequence MRCSQREVFVKREEPTNPEWGKPPSQR. D71 (nucleophile) is an active-site residue. Residues 238 to 313 enclose the PUA domain; it reads LPKIWVRDSA…AVVRTDRVVM (76 aa).

It belongs to the pseudouridine synthase TruB family. Type 2 subfamily.

It carries out the reaction uridine(55) in tRNA = pseudouridine(55) in tRNA. Functionally, could be responsible for synthesis of pseudouridine from uracil-55 in the psi GC loop of transfer RNAs. This Pyrobaculum arsenaticum (strain DSM 13514 / JCM 11321 / PZ6) protein is Probable tRNA pseudouridine synthase B.